A 353-amino-acid chain; its full sequence is Photosystem II protein D1 (353 aa).

Threonine 2 is modified (N-acetylthreonine). Phosphothreonine is present on threonine 2. 3 helical membrane-spanning segments follow: residues 29 to 46, 118 to 133, and 142 to 156; these read YIGW…TATS, HFLL…EWEL, and WIAV…AATA. Residue histidine 118 coordinates chlorophyll a. Tyrosine 126 provides a ligand contact to pheophytin a. Aspartate 170 and glutamate 189 together coordinate [CaMn4O5] cluster. The chain crosses the membrane as a helical span at residues 197–218; sequence FHMLGVAGVFGGSLFSAMHGSL. Histidine 198 lines the chlorophyll a pocket. Residues histidine 215 and 264–265 contribute to the a quinone site; that span reads SF. Fe cation is bound at residue histidine 215. Histidine 272 serves as a coordination point for Fe cation. A helical transmembrane segment spans residues 274–288; sequence FLAAWPVVGIWFTAL. [CaMn4O5] cluster-binding residues include histidine 332, glutamate 333, aspartate 342, and alanine 344. Residues 345–353 constitute a propeptide that is removed on maturation; sequence AVEAPSING.

Belongs to the reaction center PufL/M/PsbA/D family. As to quaternary structure, PSII is composed of 1 copy each of membrane proteins PsbA, PsbB, PsbC, PsbD, PsbE, PsbF, PsbH, PsbI, PsbJ, PsbK, PsbL, PsbM, PsbT, PsbX, PsbY, PsbZ, Psb30/Ycf12, at least 3 peripheral proteins of the oxygen-evolving complex and a large number of cofactors. It forms dimeric complexes. It depends on The D1/D2 heterodimer binds P680, chlorophylls that are the primary electron donor of PSII, and subsequent electron acceptors. It shares a non-heme iron and each subunit binds pheophytin, quinone, additional chlorophylls, carotenoids and lipids. D1 provides most of the ligands for the Mn4-Ca-O5 cluster of the oxygen-evolving complex (OEC). There is also a Cl(-1) ion associated with D1 and D2, which is required for oxygen evolution. The PSII complex binds additional chlorophylls, carotenoids and specific lipids. as a cofactor. In terms of processing, tyr-161 forms a radical intermediate that is referred to as redox-active TyrZ, YZ or Y-Z. Post-translationally, C-terminally processed by CTPA; processing is essential to allow assembly of the oxygen-evolving complex and thus photosynthetic growth.

The protein localises to the plastid. It localises to the chloroplast thylakoid membrane. It carries out the reaction 2 a plastoquinone + 4 hnu + 2 H2O = 2 a plastoquinol + O2. Photosystem II (PSII) is a light-driven water:plastoquinone oxidoreductase that uses light energy to abstract electrons from H(2)O, generating O(2) and a proton gradient subsequently used for ATP formation. It consists of a core antenna complex that captures photons, and an electron transfer chain that converts photonic excitation into a charge separation. The D1/D2 (PsbA/PsbD) reaction center heterodimer binds P680, the primary electron donor of PSII as well as several subsequent electron acceptors. This chain is Photosystem II protein D1, found in Chloranthus spicatus (Chulantree).